We begin with the raw amino-acid sequence, 314 residues long: uncharacterized protein (314 aa).

A run of 10 helical transmembrane segments spans residues 4–23, 36–53, 68–90, 97–116, 131–153, 174–196, 200–222, 229–251, 261–283, and 290–309; these read FFIG…YFSG, FNKL…FVSI, TLVS…YKFF, AAVC…GFAV, VAII…LNPS, PVVW…PAAW, FNLI…LAAH, EIAY…VGMA, MMVL…RFNV, and ASLA…WIYV.

The protein belongs to the auxin efflux carrier (TC 2.A.69) family.

It localises to the cell membrane. This is an uncharacterized protein from Escherichia coli O157:H7.